Consider the following 66-residue polypeptide: Prophage transcriptional regulatory protein (66 aa).

This is Prophage transcriptional regulatory protein (croE) from Escherichia coli (strain K12).